The primary structure comprises 135 residues: Transcription antitermination protein NusB (135 aa).

This sequence belongs to the NusB family.

Involved in transcription antitermination. Required for transcription of ribosomal RNA (rRNA) genes. Binds specifically to the boxA antiterminator sequence of the ribosomal RNA (rrn) operons. In Clostridium perfringens (strain SM101 / Type A), this protein is Transcription antitermination protein NusB.